The chain runs to 133 residues: Small ribosomal subunit protein uS8 (133 aa).

It belongs to the universal ribosomal protein uS8 family. As to quaternary structure, part of the 30S ribosomal subunit. Contacts proteins S5 and S12.

Functionally, one of the primary rRNA binding proteins, it binds directly to 16S rRNA central domain where it helps coordinate assembly of the platform of the 30S subunit. In Orientia tsutsugamushi (strain Ikeda) (Rickettsia tsutsugamushi), this protein is Small ribosomal subunit protein uS8.